Consider the following 84-residue polypeptide: Small ribosomal subunit protein uS17 (84 aa).

This sequence belongs to the universal ribosomal protein uS17 family. Part of the 30S ribosomal subunit.

Functionally, one of the primary rRNA binding proteins, it binds specifically to the 5'-end of 16S ribosomal RNA. The polypeptide is Small ribosomal subunit protein uS17 (Actinobacillus pleuropneumoniae serotype 5b (strain L20)).